Reading from the N-terminus, the 184-residue chain is Cell division protein ZapC (184 aa).

It belongs to the ZapC family. In terms of assembly, interacts directly with FtsZ.

It is found in the cytoplasm. Contributes to the efficiency of the cell division process by stabilizing the polymeric form of the cell division protein FtsZ. Acts by promoting interactions between FtsZ protofilaments and suppressing the GTPase activity of FtsZ. This chain is Cell division protein ZapC, found in Idiomarina loihiensis (strain ATCC BAA-735 / DSM 15497 / L2-TR).